A 67-amino-acid polypeptide reads, in one-letter code: Toxin Bl-1 (67 aa).

One can recognise an LCN-type CS-alpha/beta domain in the interval 2-66; sequence RDGYISQPEN…GIIVDGIKCH (65 aa). Cystine bridges form between Cys12–Cys65, Cys16–Cys37, Cys23–Cys47, and Cys27–Cys49. The residue at position 67 (Thr67) is a Threonine amide.

This sequence belongs to the long (4 C-C) scorpion toxin superfamily. Sodium channel inhibitor family. Alpha subfamily. In terms of tissue distribution, expressed by the venom gland.

The protein resides in the secreted. In terms of biological role, alpha toxins bind voltage-independently at site-3 of sodium channels (Nav) and inhibit the inactivation of the activated channels, thereby blocking neuronal transmission. Is highly toxic to insects (tested on the crickets A.domesticus). This peptide may also be toxic to mammals, since it is similar to alpha-like toxins that are active on both insect and mammalian sodium channels. This chain is Toxin Bl-1, found in Buthacus leptochelys (Egyptian fat-tailed scorpion).